Here is a 232-residue protein sequence, read N- to C-terminus: Protein shisa-3 (232 aa).

A signal peptide spans 1–19 (MRLLGCFFLIFLTWGSARA). Residues 20–93 (QGEYCHGWLD…GVSAQPVYVP (74 aa)) are Lumenal-facing. A helical transmembrane segment spans residues 94–114 (FLIVGSIFIAFIIVGSLVAVY). Residues 115–232 (CCTCLRPKQT…NKSCPDFRQS (118 aa)) are Cytoplasmic-facing. The disordered stretch occupies residues 146–185 (TSGNLRTPSRQSSTATSSTSTGGSVRRLSSSRADPGYLVS). Over residues 151–177 (RTPSRQSSTATSSTSTGGSVRRLSSSR) the composition is skewed to low complexity.

This sequence belongs to the shisa family. In terms of assembly, interacts with fzd8 and fgfr1.

Its subcellular location is the endoplasmic reticulum membrane. Its function is as follows. Plays an essential role in the maturation of presomitic mesoderm cells by individual attenuation of both fgf and wnt signaling. Regulates head and somite developmen. Inhibits both wnt and fgf signaling through the regulation of protein maturation and cell surface transportation of their receptors within the endoplasmic reticulum. The sequence is that of Protein shisa-3 (shisa3) from Xenopus laevis (African clawed frog).